The primary structure comprises 111 residues: Resistin-like gamma (111 aa).

The N-terminal stretch at 1-23 (MKTAICSLLICIFLLQLMVPVNT) is a signal peptide. Intrachain disulfides connect Cys55–Cys108, Cys67–Cys107, Cys76–Cys93, Cys78–Cys95, and Cys82–Cys97.

Belongs to the resistin/FIZZ family. Homodimer. Heterodimer with RETNLB. In terms of tissue distribution, highly expressed in bone marrow, spleen and white blood cells. Also detected at low levels in thymus, lung, trachea, white adipose tissue, nasal respiratory epithelium, colon, small intestine, kidney, liver, and heart.

Its subcellular location is the secreted. Its function is as follows. Probable hormone. Promotes chemotaxis in myeloid cells. This chain is Resistin-like gamma, found in Rattus norvegicus (Rat).